The sequence spans 575 residues: Transcription factor COE2 (575 aa).

The interval 62 to 65 (RKSN) is interaction with DNA. A C5-type zinc finger spans residues 150–169 (CRVLLTHEVMCSRCCEKKSC). Interaction with DNA regions lie at residues 196–203 (NCLKTAGN) and 235–238 (NNSK). The region spanning 253–336 (PCIKAISPSE…KGAPGRFIYT (84 aa)) is the IPT/TIG domain. Residues 441 to 453 (STQGNNQGYIRNT) are compositionally biased toward polar residues. Positions 441 to 479 (STQGNNQGYIRNTSSISPRGYSSSSTPQQSNYSTSSNSM) are disordered. Positions 454–479 (SSISPRGYSSSSTPQQSNYSTSSNSM) are enriched in low complexity.

This sequence belongs to the COE family. In terms of assembly, forms either a homodimer or a heterodimer with a related family member. Interacts with SIX1.

Its subcellular location is the nucleus. In terms of biological role, transcription factor that, in osteoblasts, activates the decoy receptor for RANKL, TNFRSF11B, which in turn regulates osteoclast differentiation. Acts in synergy with the Wnt-responsive LEF1/CTNNB1 pathway. Recognizes variations of the palindromic sequence 5'-ATTCCCNNGGGAATT-3'. This chain is Transcription factor COE2 (EBF2), found in Bos taurus (Bovine).